The chain runs to 247 residues: UPF0259 membrane protein BUAP5A_271 (247 aa).

6 helical membrane passes run isoleucine 20–phenylalanine 40, isoleucine 85–valine 105, isoleucine 114–leucine 134, phenylalanine 137–leucine 157, isoleucine 188–alanine 208, and leucine 218–phenylalanine 238.

This sequence belongs to the UPF0259 family.

The protein localises to the cell membrane. The chain is UPF0259 membrane protein BUAP5A_271 from Buchnera aphidicola subsp. Acyrthosiphon pisum (strain 5A).